Here is a 448-residue protein sequence, read N- to C-terminus: DNA repair protein RadA (448 aa).

The segment at 10–27 adopts a C4-type zinc-finger fold; sequence CSNCGNTSPKWSGQCFDC. 91–98 provides a ligand contact to ATP; that stretch reads GDPGIGKS. The RadA KNRFG motif signature appears at 250–254; sequence KNRFG. Residues 349–448 form a lon-protease-like region; the sequence is EVYLSIAGGL…KDLKLLLGSS (100 aa).

This sequence belongs to the RecA family. RadA subfamily.

In terms of biological role, DNA-dependent ATPase involved in processing of recombination intermediates, plays a role in repairing DNA breaks. Stimulates the branch migration of RecA-mediated strand transfer reactions, allowing the 3' invading strand to extend heteroduplex DNA faster. Binds ssDNA in the presence of ADP but not other nucleotides, has ATPase activity that is stimulated by ssDNA and various branched DNA structures, but inhibited by SSB. Does not have RecA's homology-searching function. The sequence is that of DNA repair protein RadA from Rickettsia bellii (strain RML369-C).